A 102-amino-acid chain; its full sequence is Large ribosomal subunit protein uL23 (102 aa).

This sequence belongs to the universal ribosomal protein uL23 family. As to quaternary structure, part of the 50S ribosomal subunit. Contacts protein L29, and trigger factor when it is bound to the ribosome.

In terms of biological role, one of the early assembly proteins it binds 23S rRNA. One of the proteins that surrounds the polypeptide exit tunnel on the outside of the ribosome. Forms the main docking site for trigger factor binding to the ribosome. This chain is Large ribosomal subunit protein uL23, found in Cutibacterium acnes (strain DSM 16379 / KPA171202) (Propionibacterium acnes).